We begin with the raw amino-acid sequence, 158 residues long: 6,7-dimethyl-8-ribityllumazine synthase (158 aa).

Residues Phe-24, 58–60 (AFE), and 82–84 (AVI) contribute to the 5-amino-6-(D-ribitylamino)uracil site. 87–88 (GT) is a binding site for (2S)-2-hydroxy-3-oxobutyl phosphate. His-90 serves as the catalytic Proton donor. Phe-115 lines the 5-amino-6-(D-ribitylamino)uracil pocket. Arg-129 serves as a coordination point for (2S)-2-hydroxy-3-oxobutyl phosphate.

The protein belongs to the DMRL synthase family. As to quaternary structure, forms an icosahedral capsid composed of 60 subunits, arranged as a dodecamer of pentamers.

The enzyme catalyses (2S)-2-hydroxy-3-oxobutyl phosphate + 5-amino-6-(D-ribitylamino)uracil = 6,7-dimethyl-8-(1-D-ribityl)lumazine + phosphate + 2 H2O + H(+). The protein operates within cofactor biosynthesis; riboflavin biosynthesis; riboflavin from 2-hydroxy-3-oxobutyl phosphate and 5-amino-6-(D-ribitylamino)uracil: step 1/2. In terms of biological role, catalyzes the formation of 6,7-dimethyl-8-ribityllumazine by condensation of 5-amino-6-(D-ribitylamino)uracil with 3,4-dihydroxy-2-butanone 4-phosphate. This is the penultimate step in the biosynthesis of riboflavin. This Pseudomonas putida (strain GB-1) protein is 6,7-dimethyl-8-ribityllumazine synthase.